The primary structure comprises 102 residues: MQQARVRLAGTSPEDLDDICADVREIADSTGVALSGPIPLPTKTLEIPSRKSPDGEGTATWEHWEMRVHKRLIDIDADERALRQLMRVQVPNDVSIEIVLED.

Residues 35–58 are disordered; it reads SGPIPLPTKTLEIPSRKSPDGEGT.

The protein belongs to the universal ribosomal protein uS10 family. Part of the 30S ribosomal subunit.

Involved in the binding of tRNA to the ribosomes. This chain is Small ribosomal subunit protein uS10, found in Halorubrum lacusprofundi (strain ATCC 49239 / DSM 5036 / JCM 8891 / ACAM 34).